Here is a 1463-residue protein sequence, read N- to C-terminus: Probable ATP-dependent RNA helicase spindle-E (1463 aa).

In terms of domain architecture, Helicase ATP-binding spans 131–296 (LKAIRENPVV…FKIPGPNSLF (166 aa)). Position 144-151 (144-151 (GMTGCGKT)) interacts with ATP. The DEAH box signature appears at 243–246 (DEVH). In terms of domain architecture, Helicase C-terminal spans 348–531 (VCDRFIDEFE…NVVLKTKLLD (184 aa)). In terms of domain architecture, Tudor spans 951–1016 (AFKQRDIVAA…QLRGTPLDMF (66 aa)).

This sequence belongs to the DEAD box helicase family. DEAH subfamily.

The protein resides in the cytoplasm. It carries out the reaction ATP + H2O = ADP + phosphate + H(+). Functionally, probable ATP-binding RNA helicase which plays a central role during gametogenesis by repressing transposable elements and preventing their mobilization, which is essential for the germline integrity. Acts via the piRNA metabolic process, which mediates the repression of transposable elements during meiosis by forming complexes composed of piRNAs and Piwi proteins and govern the methylation and subsequent repression of transposons. The polypeptide is Probable ATP-dependent RNA helicase spindle-E (spn-E) (Anopheles gambiae (African malaria mosquito)).